Consider the following 609-residue polypeptide: Kelch-like protein 20 (609 aa).

A BTB domain is found at 68 to 135; sequence CDVVLVVGAK…AYTSQITVEE (68 aa). The BACK domain maps to 170 to 272; the sequence is CLGIRAFADT…SPKFLVGTVG (103 aa). 6 Kelch repeats span residues 319-365, 367-413, 414-460, 462-507, 509-554, and 556-601; these read VLFA…VLDD, LYAV…VLGG, FLYA…VLGG, LYAV…VYQD, IYAV…VVNG, and LMAV…VIKM.

Component of the BCR(KLHL20) E3 ubiquitin ligase complex, at least composed of CUL3, KLHL20 and RBX1. Interacts with PDZ-RhoGEF/ARHGEF11, DAPK1, PML and CORO7. Interacts with F-actin. Interacts with IFN-gamma (IFNG). Interacts (via kelch repeats) with IVNS1ABP (via kelch repeats); this interaction blocks the assembly of CUL3-KLHL20 complex.

The protein localises to the cytoplasm. The protein resides in the perinuclear region. It is found in the nucleus. It localises to the golgi apparatus. Its subcellular location is the trans-Golgi network. The protein localises to the cell projection. The protein resides in the axon. It is found in the dendrite. It functions in the pathway protein modification; protein ubiquitination. Functionally, substrate-specific adapter of a BCR (BTB-CUL3-RBX1) E3 ubiquitin-protein ligase complex involved in interferon response and anterograde Golgi to endosome transport. The BCR(KLHL20) E3 ubiquitin ligase complex mediates the ubiquitination of DAPK1, leading to its degradation by the proteasome, thereby acting as a negative regulator of apoptosis. The BCR(KLHL20) E3 ubiquitin ligase complex also specifically mediates 'Lys-33'-linked ubiquitination. Involved in anterograde Golgi to endosome transport by mediating 'Lys-33'-linked ubiquitination of CORO7, promoting interaction between CORO7 and EPS15, thereby facilitating actin polymerization and post-Golgi trafficking. Also acts as a regulator of endothelial migration during angiogenesis by controlling the activation of Rho GTPases. The BCR(KLHL20) E3 ubiquitin ligase complex acts as a regulator of neurite outgrowth by mediating ubiquitination and degradation of PDZ-RhoGEF/ARHGEF11. This is Kelch-like protein 20 (KLHL20) from Pongo abelii (Sumatran orangutan).